The sequence spans 335 residues: Legumin type B (335 aa).

Disordered regions lie at residues 47-87 and 102-155; these read PETQ…GNSV and TEED…GRNG. The span at 105-118 shows a compositional bias: basic and acidic residues; sequence DTAKRLRSPRDKRN. A compositionally biased stretch (acidic residues) spans 135 to 144; sequence QQEEEEEEEE. The Cupin type-1 domain maps to 167–314; the sequence is ENIAQPARAD…AFGLRQRQVT (148 aa).

The protein belongs to the 11S seed storage protein (globulins) family. Hexamer; each subunit is composed of an acidic and a basic chain derived from a single precursor and linked by a disulfide bond.

This protein found in the seeds of many leguminous and non-leguminous plants is the source of sulfur-containing amino acids in seed meals. The polypeptide is Legumin type B (LEB2) (Vicia faba (Broad bean)).